The primary structure comprises 146 residues: Cytochrome b5 type B (146 aa).

Residues 1–11 constitute a propeptide that is removed on maturation; the sequence is MATPEASGSGR. In terms of domain architecture, Cytochrome b5 heme-binding spans 20-96; that stretch reads VTYYRLEEVA…LKQYYIGDVH (77 aa). Residue lysine 30 is modified to N6-acetyllysine. Residues histidine 55 and histidine 79 each contribute to the heme site. At serine 80 the chain carries Phosphoserine. Residues 119–136 traverse the membrane as a helical segment; the sequence is WAYWIVPIVGAILIGFLY.

This sequence belongs to the cytochrome b5 family. As to quaternary structure, component of a complex composed of cytochrome b5, NADH-cytochrome b5 reductase (CYB5R3) and MTARC2.

The protein localises to the mitochondrion outer membrane. Functionally, cytochrome b5 is a membrane-bound hemoprotein functioning as an electron carrier for several membrane-bound oxygenases. This chain is Cytochrome b5 type B (Cyb5b), found in Rattus norvegicus (Rat).